The following is a 201-amino-acid chain: FMN-dependent NADH:quinone oxidoreductase (201 aa).

FMN contacts are provided by residues S10, 16 to 18 (SQS), 96 to 99 (MYNF), and 140 to 143 (SRGG).

Belongs to the azoreductase type 1 family. As to quaternary structure, homodimer. The cofactor is FMN.

The catalysed reaction is 2 a quinone + NADH + H(+) = 2 a 1,4-benzosemiquinone + NAD(+). It carries out the reaction N,N-dimethyl-1,4-phenylenediamine + anthranilate + 2 NAD(+) = 2-(4-dimethylaminophenyl)diazenylbenzoate + 2 NADH + 2 H(+). Functionally, quinone reductase that provides resistance to thiol-specific stress caused by electrophilic quinones. In terms of biological role, also exhibits azoreductase activity. Catalyzes the reductive cleavage of the azo bond in aromatic azo compounds to the corresponding amines. The sequence is that of FMN-dependent NADH:quinone oxidoreductase from Cronobacter sakazakii (strain ATCC BAA-894) (Enterobacter sakazakii).